The sequence spans 489 residues: Protein SIP5 (489 aa).

The tract at residues M1 to A84 is disordered. S13 bears the Phosphoserine mark. 2 stretches are compositionally biased toward polar residues: residues S21–I32 and L51–L69. T183 and T433 each carry phosphothreonine. The interval S419–P489 is disordered. At S436 the chain carries Phosphoserine. T438 bears the Phosphothreonine mark. The segment covering Q461–R477 has biased composition (basic and acidic residues).

This sequence belongs to the SIP5 family. In terms of assembly, interacts with NPA1, SNF1 and REG1.

The protein localises to the cytoplasm. May negatively regulate the SNF1 kinase by promoting the interaction of the REG1/GLC7 phosphatase complex with the kinase. Deletion of SIP5 promotes resistance to artemisinin, which is probably an indirect effect of an action on the electron transport chain. In Saccharomyces cerevisiae (strain ATCC 204508 / S288c) (Baker's yeast), this protein is Protein SIP5 (SIP5).